Here is a 215-residue protein sequence, read N- to C-terminus: Pyrophosphatase PpaX (215 aa).

The active-site Nucleophile is the aspartate 9.

It belongs to the HAD-like hydrolase superfamily. PpaX family. Requires Mg(2+) as cofactor.

It carries out the reaction diphosphate + H2O = 2 phosphate + H(+). Its function is as follows. Hydrolyzes pyrophosphate formed during P-Ser-HPr dephosphorylation by HPrK/P. Might play a role in controlling the intracellular pyrophosphate pool. In Halalkalibacterium halodurans (strain ATCC BAA-125 / DSM 18197 / FERM 7344 / JCM 9153 / C-125) (Bacillus halodurans), this protein is Pyrophosphatase PpaX.